The primary structure comprises 928 residues: Calcium-transporting ATPase 1 (928 aa).

The interval Met-1–Ala-25 is disordered. A run of 4 helical transmembrane segments spans residues Phe-81–Gly-101, Asp-105–Tyr-125, Asp-271–Gly-291, and Val-306–Leu-326. Catalysis depends on Asp-353, which acts as the 4-aspartylphosphate intermediate. The next 5 helical transmembrane spans lie at Phe-718 to Ile-738, Ile-750 to Val-770, Ala-799 to Ile-819, Phe-860 to Leu-880, and Glu-887 to Leu-907.

Belongs to the cation transport ATPase (P-type) (TC 3.A.3) family.

It localises to the golgi apparatus membrane. The catalysed reaction is Ca(2+)(in) + ATP + H2O = Ca(2+)(out) + ADP + phosphate + H(+). Its function is as follows. This magnesium-dependent enzyme catalyzes the hydrolysis of ATP coupled with the transport of calcium. Has a role in the secretory pathway. This Yarrowia lipolytica (strain CLIB 122 / E 150) (Yeast) protein is Calcium-transporting ATPase 1 (PMR1).